Here is an 89-residue protein sequence, read N- to C-terminus: Small ribosomal subunit protein uS15 (89 aa).

The protein belongs to the universal ribosomal protein uS15 family. As to quaternary structure, part of the 30S ribosomal subunit. Forms a bridge to the 50S subunit in the 70S ribosome, contacting the 23S rRNA.

Its function is as follows. One of the primary rRNA binding proteins, it binds directly to 16S rRNA where it helps nucleate assembly of the platform of the 30S subunit by binding and bridging several RNA helices of the 16S rRNA. Forms an intersubunit bridge (bridge B4) with the 23S rRNA of the 50S subunit in the ribosome. This is Small ribosomal subunit protein uS15 from Streptococcus suis (strain 98HAH33).